The chain runs to 298 residues: ATP synthase gamma chain (298 aa).

This sequence belongs to the ATPase gamma chain family. F-type ATPases have 2 components, CF(1) - the catalytic core - and CF(0) - the membrane proton channel. CF(1) has five subunits: alpha(3), beta(3), gamma(1), delta(1), epsilon(1). CF(0) has three main subunits: a, b and c.

It localises to the cell membrane. Its function is as follows. Produces ATP from ADP in the presence of a proton gradient across the membrane. The gamma chain is believed to be important in regulating ATPase activity and the flow of protons through the CF(0) complex. The chain is ATP synthase gamma chain from Parafrankia sp. (strain EAN1pec).